The primary structure comprises 353 residues: Major outer membrane protein (353 aa).

An N-terminal signal peptide occupies residues 1–20; sequence MKKTIVALAVAAVAATSANA.

In terms of assembly, disulfide bond interactions within and between MOMP molecules and other components form high molecular-weight oligomers.

The protein localises to the cell outer membrane. In terms of biological role, structural rigidity of the outer membrane of elementary bodies and porin forming, permitting diffusion of solutes through the intracellular reticulate body membrane. This is Major outer membrane protein (ompH) from Pasteurella multocida.